A 206-amino-acid chain; its full sequence is Ribonuclease HII (206 aa).

An RNase H type-2 domain is found at 18–206 (LRIAGVDEVG…PVHNILYQEK (189 aa)). A divalent metal cation-binding residues include aspartate 24, glutamate 25, and aspartate 115.

This sequence belongs to the RNase HII family. Requires Mn(2+) as cofactor. It depends on Mg(2+) as a cofactor.

It localises to the cytoplasm. The enzyme catalyses Endonucleolytic cleavage to 5'-phosphomonoester.. Its function is as follows. Endonuclease that specifically degrades the RNA of RNA-DNA hybrids. The protein is Ribonuclease HII of Dinoroseobacter shibae (strain DSM 16493 / NCIMB 14021 / DFL 12).